The following is a 540-amino-acid chain: Putative sel1-like repeat-containing protein R815 (540 aa).

6 Sel1-like repeats span residues 129–164, 165–200, 201–236, 237–272, 273–308, and 309–344; these read IDAQTNYGLVNEYGIGVKKNIKKAIKWYKLSCYKEN, LFGLLFLGSLYERGYGVSCDKHMAFNLYEKATKHNY, PAVKRQLAFMYRTGSGTTKNINKSHELYREAANQGY, PLAQYALALQCKYGHGCIKNYKEAETWLIRSYNNGC, LYATYSLARLYIETKSPLRNYSRAFELMQEAASENY, and LLAINYLAKIYKNGIGVNKNISRAIYWYYKAGNSTK.

The polypeptide is Putative sel1-like repeat-containing protein R815 (Acanthamoeba polyphaga (Amoeba)).